A 260-amino-acid chain; its full sequence is Carbonic anhydrase 3 (260 aa).

Ala2 carries the N-acetylalanine modification. The Alpha-carbonic anhydrase domain maps to 3 to 259 (KEWGYASHNG…INNRVVRASF (257 aa)). Phosphoserine occurs at positions 29, 43, 48, 50, and 55. The segment at 64–67 (KTCR) is involved in proton transfer. The residue at position 73 (Thr73) is a Phosphothreonine. Zn(2+)-binding residues include His94, His96, and His119. Tyr127 carries the post-translational modification Phosphotyrosine. 2 positions are modified to phosphothreonine: Thr129 and Thr176. 2 positions are modified to S-glutathionyl cysteine: Cys182 and Cys187. 198–199 (TT) is a binding site for substrate. Thr216 is subject to Phosphothreonine. A Phosphoserine modification is found at Ser219.

It belongs to the alpha-carbonic anhydrase family. The cofactor is Zn(2+). Post-translationally, S-thiolated both by thiol-disulfide exchange with glutathione disulfide and by oxyradical-initiated S-thiolation with reduced glutathione. In terms of processing, S-glutathionylated in hepatocytes under oxidative stress. Muscle specific.

It localises to the cytoplasm. It catalyses the reaction hydrogencarbonate + H(+) = CO2 + H2O. With respect to regulation, activated by proton donors such as imidazole and the dipeptide histidylhistidine. Inhibited by coumarins and sulfonamide derivatives such as acetazolamide. Its function is as follows. Reversible hydration of carbon dioxide. The sequence is that of Carbonic anhydrase 3 from Homo sapiens (Human).